Consider the following 241-residue polypeptide: Chaperone protein FimC (241 aa).

The first 36 residues, 1 to 36 (MSNKNVNVRKSQEITFCLLAGILMFMAMMVAGRAEA), serve as a signal peptide directing secretion.

Belongs to the periplasmic pilus chaperone family.

It is found in the periplasm. Functionally, required for the biogenesis of type 1 fimbriae. Binds and interact with FimH. This Escherichia coli (strain K12) protein is Chaperone protein FimC (fimC).